Reading from the N-terminus, the 1323-residue chain is Phosphoribosylformylglycinamidine synthase (1323 aa).

ATP contacts are provided by residues 312–323 (GAATGSGGEIRD), 391–393 (NGY), and Ala691. The Mg(2+) site is built by Asp692, Glu733, Asn737, and Asp903. Ser905 provides a ligand contact to ATP. A Glutamine amidotransferase type-1 domain is found at 1062–1306 (VAILREQGVN…YPHSKASEWG (245 aa)). Cys1156 serves as the catalytic Nucleophile. Residues His1284 and Glu1286 contribute to the active site.

This sequence in the N-terminal section; belongs to the FGAMS family.

The protein resides in the cytoplasm. The enzyme catalyses N(2)-formyl-N(1)-(5-phospho-beta-D-ribosyl)glycinamide + L-glutamine + ATP + H2O = 2-formamido-N(1)-(5-O-phospho-beta-D-ribosyl)acetamidine + L-glutamate + ADP + phosphate + H(+). Its pathway is purine metabolism; IMP biosynthesis via de novo pathway; 5-amino-1-(5-phospho-D-ribosyl)imidazole from N(2)-formyl-N(1)-(5-phospho-D-ribosyl)glycinamide: step 1/2. Its function is as follows. Phosphoribosylformylglycinamidine synthase involved in the purines biosynthetic pathway. Catalyzes the ATP-dependent conversion of formylglycinamide ribonucleotide (FGAR) and glutamine to yield formylglycinamidine ribonucleotide (FGAM) and glutamate. The sequence is that of Phosphoribosylformylglycinamidine synthase (ade3) from Schizosaccharomyces pombe (strain 972 / ATCC 24843) (Fission yeast).